The primary structure comprises 312 residues: Methionyl-tRNA formyltransferase (312 aa).

109–112 contributes to the (6S)-5,6,7,8-tetrahydrofolate binding site; that stretch reads SILP.

This sequence belongs to the Fmt family.

It catalyses the reaction L-methionyl-tRNA(fMet) + (6R)-10-formyltetrahydrofolate = N-formyl-L-methionyl-tRNA(fMet) + (6S)-5,6,7,8-tetrahydrofolate + H(+). In terms of biological role, attaches a formyl group to the free amino group of methionyl-tRNA(fMet). The formyl group appears to play a dual role in the initiator identity of N-formylmethionyl-tRNA by promoting its recognition by IF2 and preventing the misappropriation of this tRNA by the elongation apparatus. This is Methionyl-tRNA formyltransferase from Dictyoglomus thermophilum (strain ATCC 35947 / DSM 3960 / H-6-12).